Consider the following 145-residue polypeptide: Large ribosomal subunit protein uL15 (145 aa).

The segment at 1 to 42 (MELHTLKATPGSRKAKHRVGRGHAAGKGKQAGRGQSGQTKRS) is disordered. Positions 13–26 (RKAKHRVGRGHAAG) are enriched in basic residues.

It belongs to the universal ribosomal protein uL15 family. In terms of assembly, part of the 50S ribosomal subunit.

In terms of biological role, binds to the 23S rRNA. This chain is Large ribosomal subunit protein uL15, found in Metamycoplasma arthritidis (strain 158L3-1) (Mycoplasma arthritidis).